A 478-amino-acid polypeptide reads, in one-letter code: Zinc metalloproteinase/disintegrin (478 aa).

Positions 1 to 20 are cleaved as a signal peptide; the sequence is MIEVLLVTICLAAFPYQGSS. Residues 21 to 187 constitute a propeptide that is removed on maturation; it reads IILESGNVND…PIKKASQSNL (167 aa). 3 disulfides stabilise this stretch: Cys-304–Cys-384, Cys-344–Cys-368, and Cys-346–Cys-351. Residue His-329 coordinates Zn(2+). Glu-330 is a catalytic residue. His-333 and His-339 together coordinate Zn(2+). Positions 390 to 405 are excised as a propeptide; that stretch reads LRTDTVSTPVSGNELL. Residues 397–478 form the Disintegrin domain; sequence TPVSGNELLE…AGCPRNPFHA (82 aa). Cystine bridges form between Cys-411/Cys-426, Cys-413/Cys-421, Cys-420/Cys-443, Cys-434/Cys-440, Cys-439/Cys-464, and Cys-452/Cys-471. Residues 456–458 carry the Cell attachment site motif; that stretch reads RGD.

Belongs to the venom metalloproteinase (M12B) family. P-II subfamily. P-IIa sub-subfamily. As to quaternary structure, monomer. As to expression, expressed by the venom gland.

The protein resides in the secreted. Functionally, binds alpha-5/beta-1 (ITGAV/ITGB1), alpha-V/beta-3 (ITGAV/ITGB3) and alpha-M/beta-2 (ITGAM/ITGB2) integrins. Is a potent inhibitor of platelet aggregation induced by ADP, collagen, and thrombin. Induces neutrophil chemotaxis and inhibits the chemotaxis of human neutrophils toward fMLP, IL-8, and jarastatin itself. Directly activates an integrin-coupled signaling and modulate the MAPK pathway in different ways, leading the neutrophils to express different functional response. Induces Erk-2 translocation to nucleus and a delay of the spontaneous apoptosis of neutrophils. Increases the IL-8 mRNA levels in neutrophils. When injected simultaneously with melanoma cells in mice, jarastatin, flavoridin (FL) and kistrin (KR) significantly reduce tumor lung colonization. Inhibits mouse melanoma B16F10 cell growth in vitro. When it interacts with melanoma cells, it induces actin cytoskeleton rearrangement, increasing actin polymerization and PTK2/FAK1 phosphorylation. Interferes with NF-kappaB translocation in melanoma cells. This Bothrops jararaca (Jararaca) protein is Zinc metalloproteinase/disintegrin.